The following is a 134-amino-acid chain: Acyl carrier protein, chloroplastic (134 aa).

The N-terminal 51 residues, 1–51, are a transit peptide targeting the chloroplast; it reads MSTTFCSSVSMQATSLAATTRISFQKPGLVSRTNLSFNLRRSIPTRLSVSC. Residues 55 to 130 enclose the Carrier domain; that stretch reads PETVEKVSKI…EAAELIEELV (76 aa). Ser-90 is subject to O-(pantetheine 4'-phosphoryl)serine.

The protein belongs to the acyl carrier protein (ACP) family. Post-translationally, 4'-phosphopantetheine is transferred from CoA to a specific serine of apo-ACP by acpS. This modification is essential for activity because fatty acids are bound in thioester linkage to the sulfhydryl of the prosthetic group. Seed.

The protein localises to the plastid. It localises to the chloroplast. Its pathway is lipid metabolism; fatty acid biosynthesis. In terms of biological role, carrier of the growing fatty acid chain in fatty acid biosynthesis. In Brassica napus (Rape), this protein is Acyl carrier protein, chloroplastic (ACL1.A2).